Reading from the N-terminus, the 377-residue chain is Carbonic anhydrase 1 (377 aa).

A signal peptide spans 1 to 20 (MARTGALLLVALALAGCAQA). One can recognise an Alpha-carbonic anhydrase domain in the interval 38–318 (DHWDHGLNGE…HHHRRLLHNH (281 aa)). 3 cysteine pairs are disulfide-bonded: Cys-61–Cys-264, Cys-194–Cys-198, and Cys-296–Cys-351. Asn-101 is a glycosylation site (N-linked (GlcNAc...) asparagine). His-112 (proton acceptor) is an active-site residue. Asn-135 carries N-linked (GlcNAc...) asparagine glycosylation. The Zn(2+) site is built by His-163, His-165, and His-182. Substrate is bound by residues Thr-260 and 260 to 261 (TT). Asn-297 carries an N-linked (GlcNAc...) asparagine glycan.

It belongs to the alpha-carbonic anhydrase family. In terms of assembly, tetramer of two large and two small subunits linked by two disulfide bonds. It depends on Zn(2+) as a cofactor.

The protein resides in the periplasm. The catalysed reaction is hydrogencarbonate + H(+) = CO2 + H2O. Functionally, reversible hydration of carbon dioxide. This is Carbonic anhydrase 1 (CAH1) from Chlamydomonas reinhardtii (Chlamydomonas smithii).